The primary structure comprises 312 residues: Acetaldehyde dehydrogenase 4 (312 aa).

S12 to I15 serves as a coordination point for NAD(+). C132 acts as the Acyl-thioester intermediate in catalysis. Residues S163–N171 and N290 contribute to the NAD(+) site.

The protein belongs to the acetaldehyde dehydrogenase family.

It carries out the reaction acetaldehyde + NAD(+) + CoA = acetyl-CoA + NADH + H(+). This chain is Acetaldehyde dehydrogenase 4, found in Azotobacter vinelandii (strain DJ / ATCC BAA-1303).